Here is a 1078-residue protein sequence, read N- to C-terminus: Extracellular calcium-sensing receptor (1078 aa).

Positions 1–19 (MAFYSCCWVLLALTWHTSA) are cleaved as a signal peptide. Topologically, residues 20-610 (YGPDQRAQKK…KEIEFLSWTE (591 aa)) are extracellular. The interval 22–188 (PDQRAQKKGD…QFKSFLRTIP (167 aa)) is ligand-binding 1 (LB1). A disulfide bond links cysteine 60 and cysteine 101. 66–70 (RGFRW) contacts phosphate. Ca(2+) is bound by residues isoleucine 81, serine 84, leucine 87, and leucine 88. Asparagine 90 carries an N-linked (GlcNAc...) asparagine glycan. Residue threonine 100 participates in Ca(2+) binding. Asparagine 130 carries N-linked (GlcNAc...) asparagine glycosylation. Position 145 (threonine 145) interacts with Ca(2+). 3 residues coordinate L-tryptophan: serine 147, alanine 168, and serine 170. Ca(2+)-binding residues include serine 170, proline 188, aspartate 190, glutamate 231, and aspartate 234. The ligand-binding 2 (LB2) stretch occupies residues 189–324 (NDEHQATAMA…GGTIGFALKA (136 aa)). 7 disulfide bridges follow: cysteine 236/cysteine 561, cysteine 358/cysteine 395, cysteine 437/cysteine 449, cysteine 542/cysteine 562, cysteine 546/cysteine 565, cysteine 568/cysteine 582, and cysteine 585/cysteine 598. Residues aspartate 238 and serine 240 each coordinate spermine. Asparagine 261 and asparagine 287 each carry an N-linked (GlcNAc...) asparagine glycan. Ca(2+) is bound at residue glutamate 297. An L-tryptophan-binding site is contributed by glutamate 297. Asparagine 386 and asparagine 400 each carry an N-linked (GlcNAc...) asparagine glycan. 415–417 (RIS) lines the phosphate pocket. N-linked (GlcNAc...) asparagine glycans are attached at residues asparagine 446, asparagine 468, and asparagine 488. Tyrosine 489 contributes to the Ca(2+) binding site. The N-linked (GlcNAc...) asparagine glycan is linked to asparagine 541. The cysteine-rich (CR) stretch occupies residues 542 to 612 (CSRDCLAGTR…IEFLSWTEPF (71 aa)). Glycine 557 contacts Ca(2+). N-linked (GlcNAc...) asparagine glycosylation is present at asparagine 594. Residues 611-636 (PFGIALTLFAVLGIFLTAFVLGVFIK) traverse the membrane as a helical segment. The Cytoplasmic segment spans residues 637–648 (FRNTPIVKATNR). Residues 637 to 648 (FRNTPIVKATNR) form an intracellular loop 1 (ICL1) region. A helical membrane pass occupies residues 649–668 (ELSYLLLFSLLCCFSSSLFF). Residues 669-674 (IGEPQD) lie on the Extracellular side of the membrane. Residues 675 to 698 (WTCRLRQPAFGISFVLCISCILVK) form a helical membrane-spanning segment. Residues 699–722 (TNRVLLVFEAKIPTSFHRKWWGLN) are Cytoplasmic-facing. Residues 699–722 (TNRVLLVFEAKIPTSFHRKWWGLN) form an intracellular loop 2 (ICL2) region. A helical transmembrane segment spans residues 723–745 (LQFLLVFLCTFMQIVICVIWLYT). Residues 746 to 769 (APPSSYRNQELEDEIIFITCHEGS) lie on the Extracellular side of the membrane. A helical transmembrane segment spans residues 770–789 (LMALGFLIGYTCLLAAICFF). The Cytoplasmic portion of the chain corresponds to 790-805 (FAFKSRKLPENFNEAK). Positions 790-805 (FAFKSRKLPENFNEAK) are intracellular loop 3 (ICL3). The helical transmembrane segment at 806-828 (FITFSMLIFFIVWISFIPAYAST) threads the bilayer. The Extracellular portion of the chain corresponds to 829 to 832 (YGKF). A helical membrane pass occupies residues 833 to 854 (VSAVEVIAILAASFGLLACIFF). The Cytoplasmic segment spans residues 855 to 1078 (NKIYIILFKP…STVTENVVNS (224 aa)). The segment at 855–1078 (NKIYIILFKP…STVTENVVNS (224 aa)) is C-terminus. Positions 880–900 (AFKVAARATLRRSNVSRKRSS) are interaction with RNF19A. The residue at position 888 (threonine 888) is a Phosphothreonine; by PKC. Positions 890–898 (RRSNVSRKR) are arginine-rich retention motif. Serine 892 carries the post-translational modification Phosphoserine; by PKC. Disordered stretches follow at residues 892–963 (SNVS…PRCK), 986–1006 (AMAH…SSDT), and 1030–1055 (TGLQ…PALV). A Phosphoserine; by PKA modification is found at serine 899. The segment covering 900–918 (SSLGGSTGSTPSSSISSKS) has biased composition (low complexity). Phosphoserine is present on serine 920. The segment covering 932–960 (QQQPLALTQQEQQQQPLTLPQQQRSQQQP) has biased composition (low complexity). The span at 993-1006 (THQNSLEAQKSSDT) shows a compositional bias: polar residues. Serine 1061 carries the post-translational modification Phosphoserine.

Belongs to the G-protein coupled receptor 3 family. In terms of assembly, homodimer; disulfide-linked. Interacts with VCP. Interacts with ARRB1. Phosphorylation at Thr-888 by PKC impairs coupling with G(q)/G(11) G-proteins, while it does not affect G(i)/G(o)-coupling. Phosphorylation at Ser-892 by PKC and Ser-899 by PKA promote plasma membrane localization. Post-translationally, ubiquitinated by RNF19A; which induces proteasomal degradation. In terms of processing, N-glycosylated. In terms of tissue distribution, expressed in the temporal lobe, frontal lobe, parietal lobe, hippocampus, and cerebellum. Also found in kidney, lung, liver, heart, skeletal muscle, placenta.

It is found in the cell membrane. In resting state, adopts an open conformation, anion-binding promoting the inactive configuration. Upon aromatic amino acid-binding, the groove in the extracellular venus flytrap module is closed, thereby inducing the formation of a novel homodimer interface between subunits. Calcium ions stabilize the active state by enhancing homodimer interactions between membrane-proximal domains to fully activate the receptor. Upon activation, the homodimer adopts an asymmetric configuration of the 7-transmembrane region that primes one protomer for G-protein coupling. G-protein binding expands the transmembrane dimer interface; the restriction imposed by the receptor dimer, in combination with intracellular loop 2 (ICL2), enables G-protein activation by facilitating conformational transition of G-protein alpha. Coupling to different classes of G-proteins results in distinct CASR-G-protein interfaces. Activated by glucose, which acts as a positive allosteric modulator. Activated by positive allosteric modulator drugs cinacalcet, evocalcet and etelcalcetide, which are clinically used for the treatment of hyperparathyroidism and familial hypocalciuric hypercalcemia. Inhibited by NPS-2143, a negative allosteric modulator tested for the treatment of hypocalcemia. Activated by velcalcetide (AMG 416), a D-amino acid-containing peptide agonist that is being evaluated for the treatment of secondary hyperparathyroidism in chronic kidney disease patients receiving hemodialysis. Velcalcetide agonist acts by forming a disulfide bond with Cys-482. G-protein-coupled receptor that senses changes in the extracellular concentration of calcium ions and plays a key role in maintaining calcium homeostasis. Senses fluctuations in the circulating calcium concentration: activated by elevated circulating calcium, leading to decreased parathyroid hormone (PTH) secretion in parathyroid glands. In kidneys, acts as a key regulator of renal tubular calcium resorption. Ligand binding causes a conformation change that triggers signaling via guanine nucleotide-binding proteins (G-proteins) and modulates the activity of downstream effectors. CASR is coupled with different G(q)/G(11), G(i)/G(o)- or G(s)-classes of G-proteins depending on the context. In the parathyroid and kidney, CASR signals through G(q)/G(11) and G(i)/G(o) G-proteins: G(q)/G(11) coupling activates phospholipase C-beta, releasing diacylglycerol (DAG) and inositol 1,4,5-trisphosphate (IP3) second messengers, while G(i)/G(o) coupling mediates inhibition of adenylate cyclase activity. The G-protein-coupled receptor activity is activated by a co-agonist mechanism: aromatic amino acids, such as Trp or Phe, act concertedly with divalent cations, such as calcium or magnesium, to achieve full receptor activation. Acts as an activator of the NLRP3 inflammasome via G(i)/G(o)-mediated signaling: down-regulation of cyclic AMP (cAMP) relieving NLRP3 inhibition by cAMP. Acts as a regulator of proton-sensing receptor GPR68 in a seesaw manner: CASR-mediated signaling inhibits GPR68 signaling in response to extracellular calcium, while GPR68 inhibits CASR in presence of extracellular protons. The chain is Extracellular calcium-sensing receptor from Homo sapiens (Human).